A 160-amino-acid polypeptide reads, in one-letter code: Large ribosomal subunit protein eL21 (160 aa).

Basic and acidic residues-rich tracts occupy residues Asn-112 to Gly-123 and Arg-136 to Gly-145. Residues Asn-112 to Gly-145 form a disordered region.

It belongs to the eukaryotic ribosomal protein eL21 family. Component of the large ribosomal subunit.

It localises to the cytoplasm. Its subcellular location is the cytosol. The protein resides in the endoplasmic reticulum. Functionally, component of the large ribosomal subunit. The ribosome is a large ribonucleoprotein complex responsible for the synthesis of proteins in the cell. This Mus musculus (Mouse) protein is Large ribosomal subunit protein eL21.